Here is a 346-residue protein sequence, read N- to C-terminus: MESVSCSAAPVRSGDMESQRDMSLVPERLQRREQERQLEVERRKQKRQNQEVEKENSHFFAATFARERAAVEELLERAESVERLEEAASRLQGLQKLINDSVFFLAAYDLRQGQEALARLQAALAERRRELQPKKRFAFKTRGKDAASCTKVDAAPGIPPAVESIQDSPLPKKAEGDLGSSWLCGFSNLESQVLEKRASELHQRDVLLTELSNCTVRLYGNPNTLRLTKAHSCKLLCGPVSTSVFLEDCSDCVLAVACQQLRIHSTKDTRIFLQVTSRAIVEDCSGIQFAPYTWSYPEIDKDFESSGLDRSKNNWNDVDDFNWLARDMASPNWCILPEEERNIQWD.

Met-1 is subject to N-acetylmethionine. The tract at residues 1 to 54 is disordered; the sequence is MESVSCSAAPVRSGDMESQRDMSLVPERLQRREQERQLEVERRKQKRQNQEVEK. The span at 28 to 54 shows a compositional bias: basic and acidic residues; sequence RLQRREQERQLEVERRKQKRQNQEVEK. Ser-80 and Ser-168 each carry phosphoserine. Positions 171–323 constitute a C-CAP/cofactor C-like domain; that stretch reads PKKAEGDLGS…NWNDVDDFNW (153 aa).

This sequence belongs to the TBCC family. As to quaternary structure, supercomplex made of cofactors A to E. Cofactors A and D function by capturing and stabilizing tubulin in a quasi-native conformation. Cofactor E binds to the cofactor D-tubulin complex; interaction with cofactor C then causes the release of tubulin polypeptides that are committed to the native state.

It localises to the cytoplasm. Its function is as follows. Tubulin-folding protein; involved in the final step of the tubulin folding pathway. This is Tubulin-specific chaperone C (TBCC) from Pongo abelii (Sumatran orangutan).